The following is a 468-amino-acid chain: uncharacterized protein (468 aa).

6 helical membrane passes run 59–79, 135–155, 215–235, 297–317, 348–368, and 385–405; these read IPIVIIAVIYSSFIFFFALFI, TWINSILEILALIYSFLLLLV, VFPFTPCPLPLLLFPIFLSIL, THCCLNVFASSAFFVLLMVLV, HFIPLILTVVIELVITGLVSY, and VFTVMFTIIAVFRFVFIIILF.

It localises to the membrane. This is an uncharacterized protein from Caenorhabditis elegans.